We begin with the raw amino-acid sequence, 361 residues long: Biotin synthase (361 aa).

The tract at residues 14 to 38 is disordered; that stretch reads AQRTPEPLPPTSQGLARPSHDVVRG. Residues 86 to 315 enclose the Radical SAM core domain; it reads HKGGPAALCG…ARDILVCGGR (230 aa). Residues Cys-104, Cys-108, and Cys-111 each contribute to the [4Fe-4S] cluster site. The [2Fe-2S] cluster site is built by Cys-180 and Cys-240.

It belongs to the radical SAM superfamily. Biotin synthase family. In terms of assembly, homodimer. Requires [4Fe-4S] cluster as cofactor. It depends on [2Fe-2S] cluster as a cofactor.

The catalysed reaction is (4R,5S)-dethiobiotin + (sulfur carrier)-SH + 2 reduced [2Fe-2S]-[ferredoxin] + 2 S-adenosyl-L-methionine = (sulfur carrier)-H + biotin + 2 5'-deoxyadenosine + 2 L-methionine + 2 oxidized [2Fe-2S]-[ferredoxin]. Its pathway is cofactor biosynthesis; biotin biosynthesis; biotin from 7,8-diaminononanoate: step 2/2. Catalyzes the conversion of dethiobiotin (DTB) to biotin by the insertion of a sulfur atom into dethiobiotin via a radical-based mechanism. This is Biotin synthase from Nitratidesulfovibrio vulgaris (strain DP4) (Desulfovibrio vulgaris).